Here is a 243-residue protein sequence, read N- to C-terminus: BTB/POZ domain-containing protein At4g08455 (243 aa).

A coiled-coil region spans residues 19 to 51 (KECYVEAGETEEELKREIDDLKAKVAFLRLSSS). The BTB domain maps to 64–136 (TDVVLIASED…LYTAEACLDE (73 aa)).

Interacts with CUL3A and CUL3B.

It functions in the pathway protein modification; protein ubiquitination. May act as a substrate-specific adapter of an E3 ubiquitin-protein ligase complex (CUL3-RBX1-BTB) which mediates the ubiquitination and subsequent proteasomal degradation of target proteins. The protein is BTB/POZ domain-containing protein At4g08455 of Arabidopsis thaliana (Mouse-ear cress).